The primary structure comprises 113 residues: Ig kappa chain V-II region 7S34.1 (113 aa).

Residues 1–23 are framework-1; that stretch reads DIVMTQTAPSALVTPGESVSISC. Cys-23 and Cys-93 are oxidised to a cystine. Residues 24-39 form a complementarity-determining-1 region; sequence RSSKSLLHSNGNTYLY. Residues 40–54 are framework-2; sequence WFLQRPGQCPQLLIY. The interval 55–61 is complementarity-determining-2; that stretch reads RMSNLAS. A framework-3 region spans residues 62–93; it reads GVPDRFSGSGSGTAFTLRISRVEAEDVGVYYC. The segment at 94 to 102 is complementarity-determining-3; it reads MQQREYPYT. Residues 103–112 form a framework-4 region; that stretch reads FGGGTKLEIK.

The sequence is that of Ig kappa chain V-II region 7S34.1 from Mus musculus (Mouse).